Consider the following 379-residue polypeptide: Junctional adhesion molecule-like (379 aa).

An N-terminal signal peptide occupies residues M1–P20. The Extracellular portion of the chain corresponds to Q21 to L281. Ig-like V-type domains are found at residues P24 to E135 and P140 to V250. A disulfide bond links C45 and C119. N-linked (GlcNAc...) asparagine glycans are attached at residues N79, N89, and N125. A disulfide bridge connects residues C158 and C236. The chain crosses the membrane as a helical span at residues V282–V302. Residues K303–K379 lie on the Cytoplasmic side of the membrane. Y355 carries the phosphotyrosine modification.

The protein belongs to the immunoglobulin superfamily. As to quaternary structure, homodimer; active form in leukocyte-endothelial cell adhesion. Interacts (homodimeric form) with CXADR. Interacts (via cytoplasmic domain) with the PI3 kinase; upon CXADR-binding. Interacts with ITGA4 and ITGB1; integrin alpha-4/beta-1 may regulate leukocyte to endothelial cells adhesion by controlling JAML homodimerization. In terms of tissue distribution, expressed by gamma-delta intraepithelial T cells (at protein level).

It localises to the cell membrane. Its subcellular location is the cell junction. Functionally, transmembrane protein of the plasma membrane of leukocytes that control their migration and activation through interaction with CXADR, a plasma membrane receptor found on adjacent epithelial and endothelial cells. The interaction between both receptors mediates the activation of gamma-delta T-cells, a subpopulation of T-cells residing in epithelia and involved in tissue homeostasis and repair. Upon epithelial CXADR-binding, JAML induces downstream cell signaling events in gamma-delta T-cells through PI3-kinase and MAP kinases. It results in proliferation and production of cytokines and growth factors by T-cells that in turn stimulate epithelial tissues repair. It also controls the transmigration of leukocytes within epithelial and endothelial tissues through adhesive interactions with epithelial and endothelial CXADR. The sequence is that of Junctional adhesion molecule-like from Mus musculus (Mouse).